A 489-amino-acid polypeptide reads, in one-letter code: MHYLAVALPLLTLALAAPSNSVPLTPLNSRQYSEDLAERQSWLLDQAKGLRSKYAPHLGERGQELRRRDIIDEGITRRKRANQKRATGTVSLTDVGLDASYAGQVSIGTPAQDFLVIMDSGSSDLWVAGSTCTENFCKQTYTFDTSTSSSFITSSEAFNITYGSGDADGTLGTDTVSMAGFTVSDQTFGVVTSTSANLISYPLSGLMGLAWKSIASSGATPFWQTLAASGDWDSPEMGVYLKRYRGDNTASQIETDGGQILFGGLNTSLYNGSVNYISIDESEKDYWRIPLEAMVIQGNSVSIASSSGGSNPSCAIDTGTTLIGVPSQTANRIYSQIAGAEALSASSGYEGYYQYPCDTEVTVSLQFGGMSYSISNADMNLGSFTRDTSMCTGAFFAMDMSSRSPVQWIVGASFIKNVYTAFRYNPAAIGFAELVGGSSVSAGNPSSSTTGGGTSGSNGGGSSSGAMERKGVQLGWLVGAVAVGVAAMI.

The N-terminal stretch at 1–16 is a signal peptide; the sequence is MHYLAVALPLLTLALA. Residues 101 to 432 form the Peptidase A1 domain; that stretch reads YAGQVSIGTP…RYNPAAIGFA (332 aa). Asp-119 is an active-site residue. Residue Gly-121 participates in pepstatin A binding. A disulfide bridge links Cys-132 with Cys-137. Residues Thr-161, Gly-163, and Ser-164 each coordinate pepstatin A. Residue Asn-266 is glycosylated (N-linked (GlcNAc...) asparagine). Residue Tyr-286 participates in pepstatin A binding. The active site involves Asp-317. 2 residues coordinate pepstatin A: Thr-320 and Thr-321. Cysteines 357 and 391 form a disulfide. The tract at residues 442-466 is disordered; the sequence is AGNPSSSTTGGGTSGSNGGGSSSGA. The segment covering 450–463 has biased composition (gly residues); it reads TGGGTSGSNGGGSS. Residues 456-489 constitute a propeptide, removed at pH 5.0; by autocatalysis; it reads GSNGGGSSSGAMERKGVQLGWLVGAVAVGVAAMI.

The protein belongs to the peptidase A1 family. As to quaternary structure, monomer. Activated by the autocatalytic cleavage of the propeptide. Cleaved at the end of the propeptide promiscuously from residue 76 to residue 79. C-terminal cleavage by autocatalysis at Gly-456 at the pH optimum indicating a possible regulatory or other function of this propeptide.

It is found in the secreted. Its activity is regulated as follows. Activated by low pH. Inhibited by pepstatin A with an IC(50) of 1.4 nM. Inhibited by acetyl pepstatin. Inhibited by HIV antiretroviral therapy protease inhibitors including amprenavir and ritonavir. Inhibited by HIV-1 protease inhibitor brecanavir with an approximate IC(50) of 352 nM. Inhibited by HIV-1 protease inhibitors CGP53437 and GS-8374. From the tested peptidomimetic inhibitor molecules, macrocycles containing P2-P3' tethered side chains, statines in P1 and an alpha amino acid in P2' are the best. From the linear peptidomimetic inhibitors, the ones with a phenylstatine or hydroxyethylamine scissile bond isoster are better than compounds with a reduced bond or a homo-amide. Overall, inhibitors with a phenylalanine side chain, either unsubstituted or with a small substituent, is preferred in P1 while a bulkier P1 side chain leads to lower inhibition. Possesses prevalent extracellular endopeptidase activity at low pH condition. Required for high-density growth in acidic environments. Broad substrate specificity with preference cleavage of the peptide substrate between hydrophobic amino acids. Cleaves substrate at P1-P1' between Phe-Leu. Positively charged amino acids are preferred at P2. Prefers hydrophobic amino acids at the P3 and P4 positions. Cleaves substrate also at P1'-P2' between Leu-Val to some degree. Required for virulence in mouse inhalation model of infection. The polypeptide is Major aspartyl peptidase 1 (Cryptococcus neoformans var. grubii serotype A (strain H99 / ATCC 208821 / CBS 10515 / FGSC 9487) (Filobasidiella neoformans var. grubii)).